Reading from the N-terminus, the 93-residue chain is Vacuolar ATPase assembly integral membrane protein VMA21 (93 aa).

Residues 1–21 (MSNRVSTGKMAMAPQESVQPA) lie on the Cytoplasmic side of the membrane. Residues 22-42 (VLYKLVLFALLMAVVPIGTYF) form a helical membrane-spanning segment. Over 43–54 (STLNYLWDGSTT) the chain is Lumenal. Residues 55 to 75 (FAAISAIAAANLILVGYVVVA) form a helical membrane-spanning segment. Residues 76–93 (FREDAASRTGPLPEKKTS) are Cytoplasmic-facing. The short motif at 90–93 (KKTS) is the Prevents secretion from ER element.

The protein belongs to the VMA21 family.

The protein localises to the endoplasmic reticulum membrane. It is found in the endoplasmic reticulum-Golgi intermediate compartment membrane. The protein resides in the cytoplasmic vesicle. Its subcellular location is the COPII-coated vesicle membrane. Its function is as follows. Required for the assembly of the V0 complex of the vacuolar ATPase (V-ATPase) in the endoplasmic reticulum. The polypeptide is Vacuolar ATPase assembly integral membrane protein VMA21 (Cryptococcus neoformans var. neoformans serotype D (strain JEC21 / ATCC MYA-565) (Filobasidiella neoformans)).